Consider the following 162-residue polypeptide: ATP synthase subunit b (162 aa).

A helical transmembrane segment spans residues 16-36 (GISGGTIIYQLLMFIILLALL).

Belongs to the ATPase B chain family. As to quaternary structure, F-type ATPases have 2 components, F(1) - the catalytic core - and F(0) - the membrane proton channel. F(1) has five subunits: alpha(3), beta(3), gamma(1), delta(1), epsilon(1). F(0) has three main subunits: a(1), b(2) and c(10-14). The alpha and beta chains form an alternating ring which encloses part of the gamma chain. F(1) is attached to F(0) by a central stalk formed by the gamma and epsilon chains, while a peripheral stalk is formed by the delta and b chains.

The protein resides in the cell membrane. In terms of biological role, f(1)F(0) ATP synthase produces ATP from ADP in the presence of a proton or sodium gradient. F-type ATPases consist of two structural domains, F(1) containing the extramembraneous catalytic core and F(0) containing the membrane proton channel, linked together by a central stalk and a peripheral stalk. During catalysis, ATP synthesis in the catalytic domain of F(1) is coupled via a rotary mechanism of the central stalk subunits to proton translocation. Its function is as follows. Component of the F(0) channel, it forms part of the peripheral stalk, linking F(1) to F(0). The polypeptide is ATP synthase subunit b (Bacillus caldotenax).